Reading from the N-terminus, the 891-residue chain is Alanine--tRNA ligase (891 aa).

Zn(2+) is bound by residues histidine 564, histidine 568, cysteine 678, and histidine 682.

This sequence belongs to the class-II aminoacyl-tRNA synthetase family. Zn(2+) is required as a cofactor.

The protein resides in the cytoplasm. It carries out the reaction tRNA(Ala) + L-alanine + ATP = L-alanyl-tRNA(Ala) + AMP + diphosphate. Functionally, catalyzes the attachment of alanine to tRNA(Ala) in a two-step reaction: alanine is first activated by ATP to form Ala-AMP and then transferred to the acceptor end of tRNA(Ala). Also edits incorrectly charged Ser-tRNA(Ala) and Gly-tRNA(Ala) via its editing domain. The polypeptide is Alanine--tRNA ligase (Nitrobacter winogradskyi (strain ATCC 25391 / DSM 10237 / CIP 104748 / NCIMB 11846 / Nb-255)).